The primary structure comprises 951 residues: MTVNLSTANEFIARHIGPRQGDEQAMLNSLGFDSLEALSASVIPESIKGTSVLELGHGLSEAQALASIKAIAARNQLFKTYIGQGYYNCHTPSPILRNLLENPAWYTAYTPYQPEISQGRLEALLNFQTLISDLSGLPIANASLLDEGTAAAEAMTFCKRLSKNKGSHAFFASQHCHPQTLDVLRTRAEPLGINVVVGDERKLTDVSPFFGALLQYPASNGDLFDYRELTERFHAANALVAVAADLLALTLLTPPGEFGADVAIGSAQRFGVPLGFGGPHAAYFATRDAFKRDMPGRLVGVSVDRFGKPALRLAMQTREQHIRREKATSNICTAQVLLANIASMYAVYHGPKGLTQIAQRIHQLTAILAKGLVQLGLTVEQESFFDTLSLHTAGRTAALHDKARAQGINLRVIDAERLGLSLDETTTQADVETLWSLLADGKPAPDFAALAAAVTSGIPAALARQSAILSHPVFNRYHSETELMRYLRKLADKDLALDRTMIPLGSCTMKLNAASEMIPITWAEFGALHPFAPAEQSAGYQQLTTELEAMLCAATGYDAVSLQPNAGSQGEYAGLLAIRAYHQSRGDERRDICLIPSSAHGTNPATANMAGMRVVVTACDARGNVDIEDLRAKAIEHREHLAALMITYPSTHGVFEEGIREICGIIHDNGGQVYIDGANMNAMVGLCAPGKFGGDVSHLNLHKTFCIPHGGGGPGVGPIGVKSHLAPFLPGHAALENKKGAVCAAPFGSASILPITWMYISMMGGAGLKRASQLAILNANYISRRLEEHYPVLYTGSNGLVAHECILDLRPLKDSSGISVDDVAKRLIDFGFHAPTMSFPVAGTLMIEPTESESKEELDRFCDAMIRIREEIRAVENGALDKDDNPLKNAPHTAAELVGEWSHPYSREQAVYPVASLVEGKYWPPVGRVDNVFGDRNLVCACPSIESYQDA.

Residue Lys-703 is modified to N6-(pyridoxal phosphate)lysine.

The protein belongs to the GcvP family. In terms of assembly, the glycine cleavage system is composed of four proteins: P, T, L and H. Requires pyridoxal 5'-phosphate as cofactor.

It carries out the reaction N(6)-[(R)-lipoyl]-L-lysyl-[glycine-cleavage complex H protein] + glycine + H(+) = N(6)-[(R)-S(8)-aminomethyldihydrolipoyl]-L-lysyl-[glycine-cleavage complex H protein] + CO2. Functionally, the glycine cleavage system catalyzes the degradation of glycine. The P protein binds the alpha-amino group of glycine through its pyridoxal phosphate cofactor; CO(2) is released and the remaining methylamine moiety is then transferred to the lipoamide cofactor of the H protein. The chain is Glycine dehydrogenase (decarboxylating) 1 from Pseudomonas fluorescens (strain ATCC BAA-477 / NRRL B-23932 / Pf-5).